Reading from the N-terminus, the 244-residue chain is MTPDIRVVIPARYASTRLPAKPLALIGGVPMIVRTAQQVAQAGFPYCVAYDDERIGDVLAAHHIPAIKTRFTHENGTQRLSEVVIARAWTDETIVVNVQGDEPLLPPDLITTVARTLIEHTQASVATLATVCDAPESPNTVKVVCDCAGYALYFSRSVMPYVRDAAAPPVSYLRHIGIYAYRVQLLKRYPQLAPTPLEQAEKLEQLRFLEHGFKIAVAQIDEAPPAGVDSPEDLARVQALFVHE.

The protein belongs to the KdsB family.

The protein resides in the cytoplasm. It carries out the reaction 3-deoxy-alpha-D-manno-oct-2-ulosonate + CTP = CMP-3-deoxy-beta-D-manno-octulosonate + diphosphate. Its pathway is nucleotide-sugar biosynthesis; CMP-3-deoxy-D-manno-octulosonate biosynthesis; CMP-3-deoxy-D-manno-octulosonate from 3-deoxy-D-manno-octulosonate and CTP: step 1/1. It participates in bacterial outer membrane biogenesis; lipopolysaccharide biosynthesis. Its function is as follows. Activates KDO (a required 8-carbon sugar) for incorporation into bacterial lipopolysaccharide in Gram-negative bacteria. The protein is 3-deoxy-manno-octulosonate cytidylyltransferase of Dichelobacter nodosus (strain VCS1703A).